We begin with the raw amino-acid sequence, 1127 residues long: WD repeat and HMG-box DNA-binding protein 1 (1127 aa).

7 WD repeats span residues 11–50, 52–91, 92–131, 134–173, 184–223, 228–267, and 271–310; these read GHPE…DPKS, SIGE…GILT, RFTT…QQKT, GHSA…CEAV, FNAK…NICT, FITQ…CLER, and EKGY…DVKQ. Disordered stretches follow at residues 811 to 1013 and 1064 to 1127; these read AAEQ…AENK and KAKG…FKKE. The segment covering 819 to 829 has biased composition (acidic residues); it reads QNEEEDEEEED. The segment covering 846 to 857 has biased composition (basic and acidic residues); it reads GDSRAKPVKQDQ. A compositionally biased stretch (acidic residues) spans 858–877; it reads YEENNEEEMEEEEKEQEEAL. 2 stretches are compositionally biased toward polar residues: residues 881–891 and 918–937; these read TPTANPFNKSV and SASQ…TSIL. The segment covering 948–960 has biased composition (low complexity); it reads SASGSPSTSKSDS. The segment at residues 1013 to 1076 is a DNA-binding region (HMG box); that stretch reads KKPKTGFQLW…GDYPGEDGAD (64 aa). Residues 1087-1100 are compositionally biased toward polar residues; it reads NMASNGCPQENTDS.

As to quaternary structure, homodimer. As to expression, found in oocytes and in various other cells.

Its subcellular location is the nucleus. It is found in the nucleoplasm. It localises to the cytoplasm. Its function is as follows. Core replisome component that acts as a replication initiation factor. Binds directly to the CMG complex and functions as a hub to recruit additional proteins to the replication fork. This chain is WD repeat and HMG-box DNA-binding protein 1 (wdhd1), found in Xenopus laevis (African clawed frog).